Reading from the N-terminus, the 254-residue chain is Ribosomal RNA small subunit methyltransferase A (254 aa).

Residues N12, L14, G38, E59, D83, and N100 each coordinate S-adenosyl-L-methionine.

It belongs to the class I-like SAM-binding methyltransferase superfamily. rRNA adenine N(6)-methyltransferase family. RsmA subfamily.

Its subcellular location is the cytoplasm. It catalyses the reaction adenosine(1518)/adenosine(1519) in 16S rRNA + 4 S-adenosyl-L-methionine = N(6)-dimethyladenosine(1518)/N(6)-dimethyladenosine(1519) in 16S rRNA + 4 S-adenosyl-L-homocysteine + 4 H(+). Its function is as follows. Specifically dimethylates two adjacent adenosines (A1518 and A1519) in the loop of a conserved hairpin near the 3'-end of 16S rRNA in the 30S particle. May play a critical role in biogenesis of 30S subunits. The polypeptide is Ribosomal RNA small subunit methyltransferase A (Mycoplasma mobile (strain ATCC 43663 / 163K / NCTC 11711) (Mesomycoplasma mobile)).